Reading from the N-terminus, the 249-residue chain is 2,3-bisphosphoglycerate-dependent phosphoglycerate mutase (249 aa).

Residues 9-16 (RHGQSQWN), 22-23 (TG), arginine 61, 88-91 (ERHY), lysine 99, 115-116 (RR), and 184-185 (GN) contribute to the substrate site. Histidine 10 serves as the catalytic Tele-phosphohistidine intermediate. Glutamate 88 (proton donor/acceptor) is an active-site residue.

It belongs to the phosphoglycerate mutase family. BPG-dependent PGAM subfamily. As to quaternary structure, homodimer.

It carries out the reaction (2R)-2-phosphoglycerate = (2R)-3-phosphoglycerate. The protein operates within carbohydrate degradation; glycolysis; pyruvate from D-glyceraldehyde 3-phosphate: step 3/5. In terms of biological role, catalyzes the interconversion of 2-phosphoglycerate and 3-phosphoglycerate. This Xylella fastidiosa (strain 9a5c) protein is 2,3-bisphosphoglycerate-dependent phosphoglycerate mutase.